The following is a 690-amino-acid chain: Glycine--tRNA ligase beta subunit (690 aa).

Belongs to the class-II aminoacyl-tRNA synthetase family. Tetramer of two alpha and two beta subunits.

It localises to the cytoplasm. The enzyme catalyses tRNA(Gly) + glycine + ATP = glycyl-tRNA(Gly) + AMP + diphosphate. In Desulfitobacterium hafniense (strain DSM 10664 / DCB-2), this protein is Glycine--tRNA ligase beta subunit.